A 365-amino-acid polypeptide reads, in one-letter code: UDP-N-acetylglucosamine--N-acetylmuramyl-(pentapeptide) pyrophosphoryl-undecaprenol N-acetylglucosamine transferase (365 aa).

UDP-N-acetyl-alpha-D-glucosamine is bound by residues 10-12 (TGG), N124, R165, S193, I248, and Q293.

Belongs to the glycosyltransferase 28 family. MurG subfamily.

The protein resides in the cell inner membrane. The catalysed reaction is di-trans,octa-cis-undecaprenyl diphospho-N-acetyl-alpha-D-muramoyl-L-alanyl-D-glutamyl-meso-2,6-diaminopimeloyl-D-alanyl-D-alanine + UDP-N-acetyl-alpha-D-glucosamine = di-trans,octa-cis-undecaprenyl diphospho-[N-acetyl-alpha-D-glucosaminyl-(1-&gt;4)]-N-acetyl-alpha-D-muramoyl-L-alanyl-D-glutamyl-meso-2,6-diaminopimeloyl-D-alanyl-D-alanine + UDP + H(+). It participates in cell wall biogenesis; peptidoglycan biosynthesis. In terms of biological role, cell wall formation. Catalyzes the transfer of a GlcNAc subunit on undecaprenyl-pyrophosphoryl-MurNAc-pentapeptide (lipid intermediate I) to form undecaprenyl-pyrophosphoryl-MurNAc-(pentapeptide)GlcNAc (lipid intermediate II). The sequence is that of UDP-N-acetylglucosamine--N-acetylmuramyl-(pentapeptide) pyrophosphoryl-undecaprenol N-acetylglucosamine transferase from Geotalea uraniireducens (strain Rf4) (Geobacter uraniireducens).